The sequence spans 681 residues: Protein asunder (681 aa).

A disordered region spans residues Pro-574–Arg-619. Positions Leu-606–Arg-612 match the Nuclear localization signal (NLS) motif.

It belongs to the Integrator subunit 13 family. In terms of assembly, belongs to the multiprotein complex Integrator, at least composed of IntS1, IntS2, IntS3, IntS4, omd/IntS5, IntS6, defl/IntS7, IntS8, IntS9, IntS10, IntS11, IntS12, asun/IntS13, IntS14 and IntS15. The core complex associates with protein phosphatase 2A subunits mts/PP2A and Pp2A-29B, to form the Integrator-PP2A (INTAC) complex. Post-translationally, phosphorylated.

The protein resides in the nucleus. It is found in the cytoplasm. It localises to the perinuclear region. Functionally, component of the integrator complex, a multiprotein complex that terminates RNA polymerase II (Pol II) transcription in the promoter-proximal region of genes. The integrator complex provides a quality checkpoint during transcription elongation by driving premature transcription termination of transcripts that are unfavorably configured for transcriptional elongation: the complex terminates transcription by (1) catalyzing dephosphorylation of the C-terminal domain (CTD) of Pol II subunit Polr2A/Rbp1 and Spt5, and (2) degrading the exiting nascent RNA transcript via endonuclease activity. The integrator complex is also involved in the 3'-end processing of the U7 snRNA, and also the spliceosomal snRNAs U1, U2, U4 and U5. In Drosophila virilis (Fruit fly), this protein is Protein asunder (asun).